The primary structure comprises 366 residues: Palmitoyltransferase ZDHHC2 (366 aa).

The Cytoplasmic portion of the chain corresponds to 1 to 15 (MAPSGPGGVRRRCRR). Residues 16–36 (VLYWIPVVFISLLLGWSYYAY) form a helical membrane-spanning segment. The Lumenal portion of the chain corresponds to 37–47 (AIQLCIVSMEN). The helical transmembrane segment at 48–68 (IGEQVVCLMAYHLLFAMFVWS) threads the bilayer. Residues 69–169 (YWKTIFTLPM…NNCVGFSNYK (101 aa)) are Cytoplasmic-facing. Residues 126-176 (RYCDRCRLIKPDRCHHCSVCDKCILKMDHHCPWVNNCVGFSNYKFFLLFLA) form the DHHC domain. The active-site S-palmitoyl cysteine intermediate is Cys-156. A helical membrane pass occupies residues 170 to 190 (FFLLFLAYSLLYCLFIAATDL). Topologically, residues 191–207 (QYFIRFWTNGLPDTQAK) are lumenal. Residues 208–228 (FHIMFLFFAAAMFSVSLSSLF) form a helical membrane-spanning segment. Residues 229–366 (GYHCWLVSKN…NPALTMENET (138 aa)) are Cytoplasmic-facing. Polar residues-rich tracts occupy residues 297–316 (VNQD…TAKN) and 332–349 (SHLL…SNSG). Positions 297-366 (VNQDPEQPST…NPALTMENET (70 aa)) are disordered. Residues 298–366 (NQDPEQPSTP…NPALTMENET (69 aa)) are mediates localization to plasma membrane and recycling endosomes. The Non-canonical dileucine endocytic signal signature appears at 334 to 335 (LL). The short motif at 357-360 (NPAL) is the NPxY-like endocytic signal element.

It belongs to the DHHC palmitoyltransferase family. In terms of assembly, monomer. Homodimer. The monomeric form has a higher catalytic activity. Post-translationally, autopalmitoylated.

It is found in the postsynaptic density. The protein resides in the postsynaptic recycling endosome membrane. The protein localises to the cell membrane. It localises to the endoplasmic reticulum membrane. Its subcellular location is the golgi apparatus membrane. The enzyme catalyses L-cysteinyl-[protein] + hexadecanoyl-CoA = S-hexadecanoyl-L-cysteinyl-[protein] + CoA. It catalyses the reaction L-cysteinyl-[protein] + tetradecanoyl-CoA = S-tetradecanoyl-L-cysteinyl-[protein] + CoA. It carries out the reaction L-cysteinyl-[protein] + octadecanoyl-CoA = S-octadecanoyl-L-cysteinyl-[protein] + CoA. Functionally, palmitoyltransferase that catalyzes the addition of palmitate onto various protein substrates and is involved in a variety of cellular processes. Has no stringent fatty acid selectivity and in addition to palmitate can also transfer onto target proteins myristate from tetradecanoyl-CoA and stearate from octadecanoyl-CoA. In the nervous system, plays a role in long term synaptic potentiation by palmitoylating AKAP5 through which it regulates protein trafficking from the dendritic recycling endosomes to the plasma membrane and controls both structural and functional plasticity at excitatory synapses. In dendrites, mediates the palmitoylation of DLG4 when synaptic activity decreases and induces synaptic clustering of DLG4 and associated AMPA-type glutamate receptors. Also mediates the de novo and turnover palmitoylation of RGS7BP, a shuttle for Gi/o-specific GTPase-activating proteins/GAPs, promoting its localization to the plasma membrane in response to the activation of G protein-coupled receptors. Through the localization of these GTPase-activating proteins/GAPs, it also probably plays a role in G protein-coupled receptors signaling in neurons. Also probably plays a role in cell adhesion by palmitoylating CD9 and CD151 to regulate their expression and function. Palmitoylates the endoplasmic reticulum protein CKAP4 and regulates its localization to the plasma membrane. Could also palmitoylate LCK and regulate its localization to the plasma membrane. This Rattus norvegicus (Rat) protein is Palmitoyltransferase ZDHHC2.